We begin with the raw amino-acid sequence, 92 residues long: C-C motif chemokine 4 (92 aa).

Residues 1-23 (MKLGVTVLSVALLVAALCPPALS) form the signal peptide. 2 disulfide bridges follow: C34/C58 and C35/C74.

Belongs to the intercrine beta (chemokine CC) family. As to quaternary structure, homodimer.

The protein resides in the secreted. In terms of biological role, monokine with inflammatory and chemokinetic properties. In Oryctolagus cuniculus (Rabbit), this protein is C-C motif chemokine 4 (CCL4).